The sequence spans 559 residues: Laccase-7 (559 aa).

The N-terminal stretch at 1 to 28 (MVIPWCSSMMRLLWFLFALLLARSVADA) is a signal peptide. N-linked (GlcNAc...) asparagine glycosylation is found at asparagine 32, asparagine 47, and asparagine 82. 2 consecutive Plastocyanin-like domains span residues 36–152 (TVES…PRNG) and 163–316 (EVPI…YNTT). Cu cation is bound by residues histidine 86 and histidine 88. N-linked (GlcNAc...) asparagine glycans are attached at residues asparagine 112 and asparagine 120. Residues histidine 131 and histidine 133 each coordinate Cu cation. Asparagine 151, asparagine 210, asparagine 220, asparagine 257, asparagine 278, asparagine 314, asparagine 363, and asparagine 443 each carry an N-linked (GlcNAc...) asparagine glycan. The Plastocyanin-like 3 domain occupies 396–543 (FRLPSQMSLL…GMVFAVDNGT (148 aa)). The Cu cation site is built by histidine 461, histidine 464, and histidine 466. N-linked (GlcNAc...) asparagine glycosylation is present at asparagine 484. 4 residues coordinate Cu cation: histidine 522, cysteine 523, histidine 524, and histidine 528. Asparagine 541 is a glycosylation site (N-linked (GlcNAc...) asparagine).

It belongs to the multicopper oxidase family. Cu cation serves as cofactor.

Its subcellular location is the secreted. The protein resides in the extracellular space. The protein localises to the apoplast. The catalysed reaction is 4 hydroquinone + O2 = 4 benzosemiquinone + 2 H2O. Its function is as follows. Lignin degradation and detoxification of lignin-derived products. In Oryza sativa subsp. japonica (Rice), this protein is Laccase-7 (LAC7).